A 397-amino-acid polypeptide reads, in one-letter code: Tryptophan synthase beta chain (397 aa).

Position 87 is an N6-(pyridoxal phosphate)lysine (Lys87).

This sequence belongs to the TrpB family. As to quaternary structure, tetramer of two alpha and two beta chains. The cofactor is pyridoxal 5'-phosphate.

The catalysed reaction is (1S,2R)-1-C-(indol-3-yl)glycerol 3-phosphate + L-serine = D-glyceraldehyde 3-phosphate + L-tryptophan + H2O. It functions in the pathway amino-acid biosynthesis; L-tryptophan biosynthesis; L-tryptophan from chorismate: step 5/5. In terms of biological role, the beta subunit is responsible for the synthesis of L-tryptophan from indole and L-serine. This is Tryptophan synthase beta chain from Escherichia fergusonii (strain ATCC 35469 / DSM 13698 / CCUG 18766 / IAM 14443 / JCM 21226 / LMG 7866 / NBRC 102419 / NCTC 12128 / CDC 0568-73).